The chain runs to 98 residues: Hainantoxin-XVII.3 (98 aa).

A signal peptide spans 1-40 (MTTVGVSLFRRSPEKITMKIATFLGLSFLLIASYFLICEA). The propeptide occupies 41–64 (QHPGFQELLILEENMRDPENSKER). 3 disulfides stabilise this stretch: Cys-66/Cys-81, Cys-73/Cys-85, and Cys-80/Cys-95.

It belongs to the hainantoxin family. 17 subfamily. In terms of tissue distribution, expressed by the venom gland.

The protein resides in the secreted. In terms of biological role, inhibits with low potency Kv1.2/KCNA2 and Kv1.3/KCNA3 voltage-gated potassium channels. This is Hainantoxin-XVII.3 from Cyriopagopus hainanus (Chinese bird spider).